Consider the following 537-residue polypeptide: Glucans biosynthesis protein D 2 (537 aa).

Residues 1–28 (MVTRRHLLASASLSATLAALGITPEALA) constitute a signal peptide (tat-type signal).

The protein belongs to the OpgD/OpgG family. Post-translationally, predicted to be exported by the Tat system. The position of the signal peptide cleavage has not been experimentally proven.

The protein localises to the periplasm. It functions in the pathway glycan metabolism; osmoregulated periplasmic glucan (OPG) biosynthesis. Its function is as follows. Probably involved in the control of the structural glucose backbone of osmoregulated periplasmic glucans (OPGs). In Ralstonia nicotianae (strain ATCC BAA-1114 / GMI1000) (Ralstonia solanacearum), this protein is Glucans biosynthesis protein D 2 (opgD2).